The chain runs to 195 residues: Large ribosomal subunit protein uL5 (195 aa).

This sequence belongs to the universal ribosomal protein uL5 family. Part of the 50S ribosomal subunit; part of the 5S rRNA/L5/L18/L25 subcomplex. Contacts the 5S rRNA and the P site tRNA. Forms a bridge to the 30S subunit in the 70S ribosome.

Functionally, this is one of the proteins that bind and probably mediate the attachment of the 5S RNA into the large ribosomal subunit, where it forms part of the central protuberance. In the 70S ribosome it contacts protein S13 of the 30S subunit (bridge B1b), connecting the 2 subunits; this bridge is implicated in subunit movement. Contacts the P site tRNA; the 5S rRNA and some of its associated proteins might help stabilize positioning of ribosome-bound tRNAs. This chain is Large ribosomal subunit protein uL5, found in Chlorobium phaeobacteroides (strain DSM 266 / SMG 266 / 2430).